The following is a 701-amino-acid chain: DNA ligase A (701 aa).

The tract at residues M1 to R23 is disordered. NAD(+) contacts are provided by residues D49–D53, S99–L100, and E129. K131 functions as the N6-AMP-lysine intermediate in the catalytic mechanism. Positions 152, 192, 308, and 332 each coordinate NAD(+). Zn(2+)-binding residues include C426, C429, C445, and C451. The region spanning S615–E701 is the BRCT domain.

This sequence belongs to the NAD-dependent DNA ligase family. LigA subfamily. It depends on Mg(2+) as a cofactor. Mn(2+) serves as cofactor.

The enzyme catalyses NAD(+) + (deoxyribonucleotide)n-3'-hydroxyl + 5'-phospho-(deoxyribonucleotide)m = (deoxyribonucleotide)n+m + AMP + beta-nicotinamide D-nucleotide.. DNA ligase that catalyzes the formation of phosphodiester linkages between 5'-phosphoryl and 3'-hydroxyl groups in double-stranded DNA using NAD as a coenzyme and as the energy source for the reaction. It is essential for DNA replication and repair of damaged DNA. Probably the only ligase required for non-homologous end joining (NHEJ) repair of 3-overhangs. The protein is DNA ligase A of Mycolicibacterium smegmatis (strain ATCC 700084 / mc(2)155) (Mycobacterium smegmatis).